A 220-amino-acid chain; its full sequence is MQREKDSLIVVSGGMDSVTLMYEKRASIALALSFDYGSKHNARELSFARLHAERLGVEHLIIPLDFIGQYFQSDLLLSGGDIPEGRYDEENMKSTVVPFRNGIMLAVAAGLAESRGLRRIYIANHFGDHAIYPDCRASFIRPMTEAVRCGTTNGVLIEAPYTDITKTDIARIGASLGIDYAETWSCYKGGVFHCGVCGTCVERKEALHDAGIPDPTEYEG.

11–21 (VSGGMDSVTLM) is an ATP binding site. Residues cysteine 186, cysteine 194, cysteine 197, and cysteine 200 each contribute to the Zn(2+) site.

This sequence belongs to the QueC family. The cofactor is Zn(2+).

It catalyses the reaction 7-carboxy-7-deazaguanine + NH4(+) + ATP = 7-cyano-7-deazaguanine + ADP + phosphate + H2O + H(+). It functions in the pathway purine metabolism; 7-cyano-7-deazaguanine biosynthesis. Functionally, catalyzes the ATP-dependent conversion of 7-carboxy-7-deazaguanine (CDG) to 7-cyano-7-deazaguanine (preQ(0)). This Porphyromonas gingivalis (strain ATCC 33277 / DSM 20709 / CIP 103683 / JCM 12257 / NCTC 11834 / 2561) protein is 7-cyano-7-deazaguanine synthase.